Here is a 1842-residue protein sequence, read N- to C-terminus: Fatty acid synthase alpha subunit pigJ (1842 aa).

Positions 120–184 (GAPVEEEGSK…TPAGGSTTPD (65 aa)) are disordered. Residues 140-175 (SGSSRTATTAKATVTTPSSSSPETAPPAASTPSQGT) show a composition bias toward low complexity. Residues 184 to 262 (DIPLSAKHVV…DALQGNFPGK (79 aa)) enclose the Carrier domain. O-(pantetheine 4'-phosphoryl)serine is present on serine 222. Residues 611–807 (GKTVLVTGAG…CGAAIGWVRG (197 aa)) are beta-ketoacyl reductase. The Ketosynthase family 3 (KS3) domain occupies 1058 to 1585 (KEFLQEIVVE…QKGGIAVVVA (528 aa)). Catalysis depends on for beta-ketoacyl synthase activity residues cysteine 1244, histidine 1470, and histidine 1511. Residues 1649 to 1672 (KARVGGHPENNNNNNNNSSSKRNT) are disordered. Residues 1658-1668 (NNNNNNNNSSS) show a composition bias toward low complexity. Mg(2+) contacts are provided by aspartate 1725, valine 1726, and glutamate 1727. Acetyl-CoA contacts are provided by residues 1725-1727 (DVE), serine 1761, 1770-1780 (EAVFKSLQTPS), and 1823-1825 (ITH). Mg(2+)-binding residues include threonine 1824 and histidine 1825.

It belongs to the thiolase-like superfamily. Fungal fatty acid synthetase subunit alpha family. As to quaternary structure, [Alpha(6)beta(6)] hexamers of two multifunctional subunits (alpha and beta).

It carries out the reaction acetyl-CoA + n malonyl-CoA + 2n NADPH + 4n H(+) = a long-chain-acyl-CoA + n CoA + n CO2 + 2n NADP(+).. It catalyses the reaction a fatty acyl-[ACP] + malonyl-[ACP] + H(+) = a 3-oxoacyl-[ACP] + holo-[ACP] + CO2. The catalysed reaction is a (3R)-hydroxyacyl-[ACP] + NADP(+) = a 3-oxoacyl-[ACP] + NADPH + H(+). It functions in the pathway secondary metabolite biosynthesis. Functionally, fatty acid synthase alpha subunit; part of the gene cluster that mediates the biosynthesis of azaphilone pigments (MonAzPs), a complex mixture of compounds with a common azaphilone skeleton very widely used as food colorants. PigJ and pigK form the two subunits of a dedicated fungal fatty acid synthase (FAS) that produces the side chain fatty acyl moiety of MonAzPs, a beta-keto fatty acid. The chain length control of the pigJ-pigK FAS is somewhat flexible as MonAzPs features either a beta-ketooctanoic or a beta-ketodecanoic acid moiety. The beta-ketoacyl-ACP probably serves as the substrate for the acetyltransferase pigD that directly transfers the fatty acyl chain to the C-4 alcohol of the pyran ring. The first step of the pathway is performed by the nrPKS pigA that forms the hexaketide precursor from successive condensations of five malonyl-CoA units, with a simple acetyl-CoA starter unit. The role of esterase pigG is not clear, but it may play at most a supplementary role in the formation of the benzaldehyde produced by the pigA nrPKS. This very reactive benzaldehyde is intercepted by the pigC ketoreductase that to provide the first stable enzyme-free MonAzPs intermediate, 6-(4-hydroxy-2-oxopentyl)-3-methyl-2,4-dioxocyclohexane carbaldehyde, also known as M7PKS-1. The FAD-dependent monooxygenase pigN hydroxylates M7PKS-1 at C-4, which triggers the formation of the pyran ring. PigJ, pigK and pigD are involved in the acetylation of the pyran ring. PigJ and pigK form the two subunits of a dedicated fungal FAS that produces the side chain fatty acyl moiety of MonAzPs and pigD transfers the fatty acyl chain to the C-4 alcohol. PigM and pigO are involved in the elimination of the omega-1 alcohol. PigM acts as an O-acetyltransferase that synthesizes the putative O-11 acetyl intermediate whereas pigO eliminates acetic acid to yield an intermediate with a C10(11) double bond. The dehydration of the C-11 alcohol followed by the reduction of the C6(7) double bond by the NAD(P)H-dependent oxidoreductase pigE increases the electrophilicity of the C-5 ketone of the resulting acyl benzopyran. This in turn sets up the C-5 ketone for an intramolecular Knoevenagel aldol condensation with the C-20 enol of the side chain. This condensation affords the characteristic linear tricyclic carbon skeletons of the yellow pigments that serve as the common precursors for the classical yellow pigments monascin and ankaflavin, orange pigments rubopunctatin and monascorubrin, and red pigments ribropunctamine and monascorubramine. The FAD-dependent oxidoreductase pigF is especially invoved in the biosynthesis of orange and red pigments via desaturation of C6(7). The sequence is that of Fatty acid synthase alpha subunit pigJ from Monascus ruber (Mold).